We begin with the raw amino-acid sequence, 130 residues long: MVRPANKILIRKNKRRTSKGVIHVQASFNNTIITITDVRGQVISWSSAGASGFKAAKKSTPFAAQIAAENALRVLIDQGMKQAEVMLSGPGRGRDTALRAIINSGIQLSFVRDVTPMPHNGCRAPKKRRV.

It belongs to the universal ribosomal protein uS11 family. As to quaternary structure, part of the 30S ribosomal subunit.

It is found in the plastid. It localises to the chloroplast. The polypeptide is Small ribosomal subunit protein uS11c (Zygnema circumcarinatum (Green alga)).